We begin with the raw amino-acid sequence, 120 residues long: Ribosome-binding factor A (120 aa).

This sequence belongs to the RbfA family. As to quaternary structure, monomer. Binds 30S ribosomal subunits, but not 50S ribosomal subunits or 70S ribosomes.

The protein localises to the cytoplasm. Functionally, one of several proteins that assist in the late maturation steps of the functional core of the 30S ribosomal subunit. Associates with free 30S ribosomal subunits (but not with 30S subunits that are part of 70S ribosomes or polysomes). Required for efficient processing of 16S rRNA. May interact with the 5'-terminal helix region of 16S rRNA. In Campylobacter jejuni subsp. jejuni serotype O:6 (strain 81116 / NCTC 11828), this protein is Ribosome-binding factor A.